A 233-amino-acid chain; its full sequence is Purine nucleoside phosphorylase DeoD-type (233 aa).

Position 4 (His4) interacts with a purine D-ribonucleoside. Residues Gly20, Arg24, Arg43, and Arg87–Thr90 contribute to the phosphate site. A purine D-ribonucleoside-binding positions include Glu179–Glu181 and Ser203–Asp204. Asp204 functions as the Proton donor in the catalytic mechanism.

It belongs to the PNP/UDP phosphorylase family. In terms of assembly, homohexamer; trimer of homodimers.

It carries out the reaction a purine D-ribonucleoside + phosphate = a purine nucleobase + alpha-D-ribose 1-phosphate. The enzyme catalyses a purine 2'-deoxy-D-ribonucleoside + phosphate = a purine nucleobase + 2-deoxy-alpha-D-ribose 1-phosphate. In terms of biological role, catalyzes the reversible phosphorolytic breakdown of the N-glycosidic bond in the beta-(deoxy)ribonucleoside molecules, with the formation of the corresponding free purine bases and pentose-1-phosphate. This is Purine nucleoside phosphorylase DeoD-type from Helicobacter pylori (strain G27).